The following is a 399-amino-acid chain: Chromosomal replication initiator protein DnaA (399 aa).

A domain I, interacts with DnaA modulators region spans residues 1–64 (MELNALIKKI…EEEVRKLIEV (64 aa)). A domain II region spans residues 64–77 (VKEKEEKKKVEIKD). The segment at 78-290 (FLNPKYTLEN…GKIKLIKLKG (213 aa)) is domain III, AAA+ region. 8 residues coordinate ADP: Ile89, Asn94, Gly122, Thr123, Gly124, Lys125, Thr126, and His127. ATP is bound at residue Ile89. ATP is bound at residue Gly122. Residues Gly124, Lys125, Thr126, and His127 each coordinate ATP. Position 126 (Thr126) interacts with Mg(2+). Val156 contacts ssDNA. Asp180 provides a ligand contact to ATP. A Mg(2+)-binding site is contributed by Asp181. The ssDNA site is built by Lys188, Arg190, and Thr191. Arg277 provides a ligand contact to ATP. The interval 291 to 399 (FEGLERKERK…LEKQAFDKIC (109 aa)) is domain IV, binds dsDNA.

Belongs to the DnaA family. In terms of assembly, in the presence of ATP analog AMP-PCP forms a linear, right-handed spiral filament with 4 subunits arranged head-to-tail, about 122 Angstroms wide and about 360 Angstroms long. Mg(2+)-AMP-PCP binds at the subunit interface with the gamma phosphate coordinated by adjacent subunits. dsDNA probably wraps on the outside of the filament. ssDNA binds to the center of the helical filament via the AAA+ domain, which stretches the DNA.

It localises to the cytoplasm. Plays an essential role in the initiation and regulation of chromosomal replication. ATP-DnaA binds to the origin of replication (oriC) to initiate formation of the DNA replication initiation complex once per cell cycle. Binds the DnaA box (a 9 base pair repeat at the origin) and separates the double-stranded (ds)DNA. Forms a right-handed helical filament on oriC DNA; dsDNA binds to the exterior of the filament while single-stranded (ss)DNA is stabiized in the filament's interior. The ATP-DnaA-oriC complex binds and stabilizes one strand of the AT-rich DNA unwinding element (DUE), permitting loading of DNA polymerase. After initiation quickly degrades to an ADP-DnaA complex that is not apt for DNA replication. Binds acidic phospholipids. Functionally, able to melt short unstable dsDNA (15-mer with melting temperature, TM, 43 degrees Celsius) in the presence of a non-hydrolyzable ATP analog; a more stable dsDNA (20-mer, TM 55 degrees Celsius) is poor substrate. ADP does not support dsDNA melting. Addition of DnaA-AMP-PCP (an ATP analog, beta,gamma-methyleneadenosine 5'-triphosphate) to an oric-containing plasmid causes a DNA shift to more positively supercoiled topological species, stabilizing a positive wrap and right-handed filament as seen in the crystal structure without DNA. Filament formation generated by positive supercoiling may destabilize the origin unwinding element through compensatory negative supercoiling strain. The protein is Chromosomal replication initiator protein DnaA of Aquifex aeolicus (strain VF5).